The sequence spans 727 residues: Kinesin-like protein KIN-14G (727 aa).

Disordered regions lie at residues 100–156 (QTAP…LHLR), 172–194 (HLSA…SCSR), and 336–357 (LAGG…GATR). Positions 114–133 (VASSTAGRASRTKSASSTGR) are enriched in polar residues. The Kinesin motor domain maps to 381–710 (NIRVFCRVRP…LRFAARVNSC (330 aa)). 461–468 (GQTGSGKT) is a binding site for ATP.

Belongs to the TRAFAC class myosin-kinesin ATPase superfamily. Kinesin family. KIN-14 subfamily.

This Oryza sativa subsp. japonica (Rice) protein is Kinesin-like protein KIN-14G.